Here is a 507-residue protein sequence, read N- to C-terminus: Subtilisin-like protease 1 (507 aa).

The N-terminal stretch at 1 to 19 (MGVFRFISISLAAVSAANA) is a signal peptide. The propeptide occupies 20–116 (AQILSMPHAQ…VEPDTIISVN (97 aa)). Positions 34–113 (SYIVMMKDDT…VMFVEPDTII (80 aa)) constitute an Inhibitor I9 domain. Positions 126-400 (SWGLARISNS…NVLISNGGAK (275 aa)) constitute a Peptidase S8 domain. Active-site charge relay system residues include D158 and H190. A disordered region spans residues 175–198 (GSNQVNDGDDRDGSGHGTHTSGTM). N-linked (GlcNAc...) asparagine glycosylation occurs at N251. A compositionally biased stretch (polar residues) spans 282 to 294 (NENQDARSSSPAS). Residues 282–312 (NENQDARSSSPASEPSVCTVGSSAEDDSRSS) form a disordered region. Catalysis depends on S345, which acts as the Charge relay system. Residues 378-394 (SSSITDVGPGTPTNVLI) show a composition bias toward polar residues. The tract at residues 378 to 486 (SSSITDVGPG…YPGGDNFDFD (109 aa)) is disordered. 2 stretches are compositionally biased toward pro residues: residues 405–428 (KPAPGPSPNPSQPSEPQQPAPSQP) and 438–449 (EPFPGEPFPGEP). Positions 450–461 (FPGESSPGESAP) are enriched in low complexity. Pro residues predominate over residues 462–476 (APAPMPPSPQHPHTP).

The protein belongs to the peptidase S8 family.

Its subcellular location is the secreted. Secreted subtilisin-like serine protease with keratinolytic activity that contributes to pathogenicity. The protein is Subtilisin-like protease 1 (SUB1) of Trichophyton equinum (Horse ringworm fungus).